The following is a 74-amino-acid chain: UPF0435 protein GTNG_0390 (74 aa).

The protein belongs to the UPF0435 family.

The chain is UPF0435 protein GTNG_0390 from Geobacillus thermodenitrificans (strain NG80-2).